The following is a 126-amino-acid chain: Glycine cleavage system H protein (126 aa).

The Lipoyl-binding domain maps to 21–103 (TVTIGISEHA…YEGGWIVKVK (83 aa)). An N6-lipoyllysine modification is found at lysine 62.

This sequence belongs to the GcvH family. The glycine cleavage system is composed of four proteins: P, T, L and H. The cofactor is (R)-lipoate.

In terms of biological role, the glycine cleavage system catalyzes the degradation of glycine. The H protein shuttles the methylamine group of glycine from the P protein to the T protein. This is Glycine cleavage system H protein from Vibrio atlanticus (strain LGP32) (Vibrio splendidus (strain Mel32)).